A 250-amino-acid polypeptide reads, in one-letter code: Pyrroloquinoline-quinone synthase (250 aa).

This sequence belongs to the PqqC family.

The catalysed reaction is 6-(2-amino-2-carboxyethyl)-7,8-dioxo-1,2,3,4,7,8-hexahydroquinoline-2,4-dicarboxylate + 3 O2 = pyrroloquinoline quinone + 2 H2O2 + 2 H2O + H(+). Its pathway is cofactor biosynthesis; pyrroloquinoline quinone biosynthesis. Its function is as follows. Ring cyclization and eight-electron oxidation of 3a-(2-amino-2-carboxyethyl)-4,5-dioxo-4,5,6,7,8,9-hexahydroquinoline-7,9-dicarboxylic-acid to PQQ. The polypeptide is Pyrroloquinoline-quinone synthase (Xanthomonas axonopodis pv. citri (strain 306)).